The primary structure comprises 365 residues: MINLGDKHSTIVVAMSGGVDSSAVAAMLHEQGHNVIGITLQLYDHGMAVGKKNACCAGQDIYDAKMVANKLGIPHYVLDYESKFKESVIDNFVDSYLQGETPLPCVQCNNSVKFRDLIKTARELGASQLATGHYVRKVSGDNGVELHTGLDPAKDQSYFLFTTTKEQLEYLSFPLGWFTKDETRKLASKFGLEVAYKPDSQDICFVPDGNYKSVINTIRPNASESGKIIHINGFALGEHSGIINYTIGQRRGLGIAYNEPLYVVKIDPKDNIVYVGPEAALHVQEFIIKDVNWLADEIKDNKKLEVAVKIRSTRPPRLAAISKLGDDKMKIRFLSAEKAVAPGQACVIYAGERVLGGGWITRDIR.

Residues 14–21 and Leu-40 contribute to the ATP site; that span reads AMSGGVDS. Cys-108 serves as the catalytic Nucleophile. Cys-108 and Cys-204 are joined by a disulfide. Gly-132 is an ATP binding site. The segment at 154 to 156 is interaction with tRNA; the sequence is KDQ. Residue Cys-204 is the Cysteine persulfide intermediate of the active site.

This sequence belongs to the MnmA/TRMU family.

It localises to the cytoplasm. The catalysed reaction is S-sulfanyl-L-cysteinyl-[protein] + uridine(34) in tRNA + AH2 + ATP = 2-thiouridine(34) in tRNA + L-cysteinyl-[protein] + A + AMP + diphosphate + H(+). Functionally, catalyzes the 2-thiolation of uridine at the wobble position (U34) of tRNA, leading to the formation of s(2)U34. This is tRNA-specific 2-thiouridylase MnmA from Rickettsia akari (strain Hartford).